The primary structure comprises 560 residues: MKVWMAILISILCWQSSVWAVCPAWSPARAQEEISRLQQQIKQWDDDYWKEGKSEVEDGVYDQLSARLTQWQRCFGSEPRDVMMPPLNGAVMHPVAHTGVRKMVDKNALSLWMRERSDLWVQPKVDGVAVTLVYRDGKLNKAISRGNGLKGEDWTQKVSLISAVPQTVSGPLANSTLQGEIFLQREGHIQQQMGGINARAKVAGLMMRQDDSDTLNSLGVFVWAWPDGPQLMTDRLKELATAGFTLTQRYTRAVKNADEVARVRNEWWKAKLPFVTDGVVVRGAKEPESRHWLPGQAEWLVAWKYQPVAQVAEVKAIQFAVGKSGKISVVASLAPVMLDDKKVQRVNIGSVRRWQEWDIAPGDQILVSLAGQGIPRIDDVVWRGAERTKPTPPENRFNSLTCYFASDVCQEQFISRLVWLGSKQVLGLDGIGEAGWRALHQTHRFEHIFSWLLLTPEQLQNTPGIAKSKSAQLWHRFNLARKQPFTRWVMAMGIPLTRAALNASDERSWSQLLFSTEQFWQQLPGTGSGRARQVIEWKENAQIKKLGSWLAAQQITGFEP.

Lys-124 (N6-AMP-lysine intermediate) is an active-site residue.

This sequence belongs to the NAD-dependent DNA ligase family. LigB subfamily.

It carries out the reaction NAD(+) + (deoxyribonucleotide)n-3'-hydroxyl + 5'-phospho-(deoxyribonucleotide)m = (deoxyribonucleotide)n+m + AMP + beta-nicotinamide D-nucleotide.. In terms of biological role, catalyzes the formation of phosphodiester linkages between 5'-phosphoryl and 3'-hydroxyl groups in double-stranded DNA using NAD as a coenzyme and as the energy source for the reaction. This is DNA ligase B from Escherichia coli O139:H28 (strain E24377A / ETEC).